We begin with the raw amino-acid sequence, 562 residues long: Tissue-type plasminogen activator (562 aa).

An N-terminal signal peptide occupies residues 1 to 19 (MYALKRELWCVLLLCGAIC). Positions 20–32 (TSPSQETHRRLRR) are excised as a propeptide. The propeptide at 33-35 (GVR) is removed by plasmin. The Fibronectin type-I domain occupies 39–81 (VTCRDEKTQMIYQQHQSWLRPLLRGNRVEHCWCNDGQTQCHSV). 17 disulfide bridges follow: Cys-41–Cys-71, Cys-69–Cys-78, Cys-86–Cys-97, Cys-91–Cys-108, Cys-110–Cys-119, Cys-127–Cys-208, Cys-148–Cys-190, Cys-179–Cys-203, Cys-215–Cys-296, Cys-236–Cys-278, Cys-267–Cys-291, Cys-299–Cys-430, Cys-342–Cys-358, Cys-350–Cys-419, Cys-444–Cys-519, Cys-476–Cys-492, and Cys-509–Cys-537. The important for binding to annexin A2 stretch occupies residues 42–52 (RDEKTQMIYQQ). The EGF-like domain occupies 82–120 (PVKSCSEPRCFNGGTCLQAIYFSDFVCQCPVGFIGRQCE). O-linked (Fuc) threonine glycosylation is present at Thr-96. 2 consecutive Kringle domains span residues 126-208 (TCYE…TPAC) and 214-296 (ECYT…LPQC). A glycan (N-linked (GlcNAc...) asparagine) is linked at Asn-152. The region spanning 311–561 (IKGGLYADIT…YLNWIRDNTR (251 aa)) is the Peptidase S1 domain. Active-site charge relay system residues include His-357 and Asp-406. Residue Asn-483 is glycosylated (N-linked (GlcNAc...) asparagine). Ser-513 (charge relay system) is an active-site residue.

Belongs to the peptidase S1 family. As to quaternary structure, heterodimer of chain A and chain B held by a disulfide bond. Binds to fibrin with high affinity. This interaction leads to an increase in the catalytic efficiency of the enzyme due to an increase in affinity for plasminogen. Similarly, binding to heparin increases the activation of plasminogen. Binds to annexin A2, cytokeratin-8, fibronectin and laminin. Binds to mannose receptor and the low-density lipoprotein receptor-related protein (LRP1); these proteins are involved in TPA clearance. Binds LRP1B; binding is followed by internalization and degradation. Forms heterodimer with SERPINA5. Interacts with SERPINE1. In complex with SERPINE1, interacts with SORL1. The single chain, almost fully active enzyme, can be further processed into a two-chain fully active form by a cleavage after Arg-310 catalyzed by plasmin, tissue kallikrein or factor Xa.

Its subcellular location is the secreted. It localises to the extracellular space. The catalysed reaction is Specific cleavage of Arg-|-Val bond in plasminogen to form plasmin.. With respect to regulation, inhibited by SERPINA5. Inhibited by SERPINE1. Converts the abundant, but inactive, zymogen plasminogen to plasmin by hydrolyzing a single Arg-Val bond in plasminogen. By controlling plasmin-mediated proteolysis, it plays an important role in tissue remodeling and degradation, in cell migration and many other physiopathological events. During oocyte activation, plays a role in cortical granule reaction in the zona reaction, which contributes to the block to polyspermy. The sequence is that of Tissue-type plasminogen activator (PLAT) from Sus scrofa (Pig).